A 308-amino-acid chain; its full sequence is Microtubule integrity protein mal3 (308 aa).

Residues 2–103 (SESRQELLAW…FVQWAKRFWD (102 aa)) form the Calponin-homology (CH) domain. The segment at 117-162 (RGNRGPANTRVMNSSAGATGPSRRRQVSSGSSTPSMTKSSANNNNV) is disordered. Residues 144–162 (SSGSSTPSMTKSSANNNNV) show a composition bias toward low complexity. The region spanning 173–247 (RAKQAQQQIT…LYSTEDGFEL (75 aa)) is the EB1 C-terminal domain.

The protein belongs to the MAPRE family. As to quaternary structure, interacts with tea2.

It is found in the cytoplasm. It localises to the cytoskeleton. Functionally, may play a role in regulating the integrity of microtubules possibly by influencing their stability. Involved in an anchoring mechanism to maintain tea2 and tip1 at growing microtubule ends. Strongly stimulates the ATPase activity of tea2. This is Microtubule integrity protein mal3 (mal3) from Schizosaccharomyces pombe (strain 972 / ATCC 24843) (Fission yeast).